Consider the following 380-residue polypeptide: Chorismate synthase (380 aa).

Position 47 (R47) interacts with NADP(+). Residues R124 to S126, G288, K303 to T307, and R329 each bind FMN.

This sequence belongs to the chorismate synthase family. As to quaternary structure, homotetramer. FMNH2 serves as cofactor.

It carries out the reaction 5-O-(1-carboxyvinyl)-3-phosphoshikimate = chorismate + phosphate. Its pathway is metabolic intermediate biosynthesis; chorismate biosynthesis; chorismate from D-erythrose 4-phosphate and phosphoenolpyruvate: step 7/7. Its function is as follows. Catalyzes the anti-1,4-elimination of the C-3 phosphate and the C-6 proR hydrogen from 5-enolpyruvylshikimate-3-phosphate (EPSP) to yield chorismate, which is the branch point compound that serves as the starting substrate for the three terminal pathways of aromatic amino acid biosynthesis. This reaction introduces a second double bond into the aromatic ring system. This Leptospira interrogans serogroup Icterohaemorrhagiae serovar copenhageni (strain Fiocruz L1-130) protein is Chorismate synthase.